The following is an 800-amino-acid chain: Receptor-like protein 47 (800 aa).

Residues 1 to 31 (MMHSSSVRRMITVKWSLCLIFCLTNSILVSA) form the signal peptide. Residues 32–759 (KHLCLPDQKD…QDEDKEEEDQ (728 aa)) are Extracellular-facing. N-linked (GlcNAc...) asparagine glycosylation is found at N66 and N102. LRR repeat units follow at residues 109-131 (QHLQ…SIGN), 133-156 (KRLK…LGNL), 157-179 (SYLT…SMGN), 190-213 (LSSV…NMSS), 214-238 (LSKL…LFMI), 240-262 (SLIL…NISS), 263-288 (PSNL…IFSP), 294-311 (YLDV…VSLP), 312-334 (SPIE…LRNQ), 335-358 (TSLE…LWSL), 360-383 (ELRY…VIQG), 385-406 (RELL…LLPV), 407-430 (VSMN…ICEL), 431-453 (DNLR…CFEN), 455-477 (HLYV…AISH), 479-500 (LQSF…LINC), 502-523 (DIEF…WLEL), 524-550 (LPNL…SLSF), 551-574 (SRLR…YFVG), 621-645 (FTIY…IGLL), 646-669 (KEVI…LSNL), 670-693 (SNLQ…LGKL), and 695-718 (FLEW…QIQT). Residue N155 is glycosylated (N-linked (GlcNAc...) asparagine). A glycan (N-linked (GlcNAc...) asparagine) is linked at N210. An N-linked (GlcNAc...) asparagine glycan is attached at N259. N-linked (GlcNAc...) asparagine glycans are attached at residues N323 and N333. N365 carries an N-linked (GlcNAc...) asparagine glycan. N-linked (GlcNAc...) asparagine glycans are attached at residues N442, N465, N499, and N514. A glycan (N-linked (GlcNAc...) asparagine) is linked at N668. An N-linked (GlcNAc...) asparagine glycan is attached at N700. The chain crosses the membrane as a helical span at residues 760–780 (VFSWIAAAIGYVPGVVCGLTI). Residues 781–800 (GHILVSHKRDWFMRIVSFFT) are Cytoplasmic-facing.

The protein belongs to the RLP family.

It is found in the cell membrane. The polypeptide is Receptor-like protein 47 (Arabidopsis thaliana (Mouse-ear cress)).